Consider the following 392-residue polypeptide: Putative glutamate--cysteine ligase 2 (392 aa).

The interval 1-21 (MMPVSGWRAVSSAPASSSAGR) is disordered. Residues 9 to 19 (AVSSAPASSSA) show a composition bias toward low complexity.

The protein belongs to the glutamate--cysteine ligase type 2 family. YbdK subfamily.

It catalyses the reaction L-cysteine + L-glutamate + ATP = gamma-L-glutamyl-L-cysteine + ADP + phosphate + H(+). ATP-dependent carboxylate-amine ligase which exhibits weak glutamate--cysteine ligase activity. This chain is Putative glutamate--cysteine ligase 2, found in Mycobacterium ulcerans (strain Agy99).